We begin with the raw amino-acid sequence, 208 residues long: Large ribosomal subunit protein uL3 (208 aa).

Gln-149 bears the N5-methylglutamine mark.

It belongs to the universal ribosomal protein uL3 family. Part of the 50S ribosomal subunit. Forms a cluster with proteins L14 and L19. Post-translationally, methylated by PrmB.

One of the primary rRNA binding proteins, it binds directly near the 3'-end of the 23S rRNA, where it nucleates assembly of the 50S subunit. In Mannheimia succiniciproducens (strain KCTC 0769BP / MBEL55E), this protein is Large ribosomal subunit protein uL3.